Consider the following 651-residue polypeptide: Probable potassium transport system protein Kup (651 aa).

12 helical membrane-spanning segments follow: residues 41-61 (LVLG…IYAF), 82-102 (VVSL…VLFV), 130-150 (LILG…VITP), 163-183 (IVAP…LVTL), 194-214 (VAIV…ASGL), 235-255 (FLTV…LAMT), 276-296 (WLWI…AFIL), 309-329 (MIPS…TVIA), 366-386 (IYIP…VLGF), 395-415 (AYGI…YIAM), 426-446 (ALPI…ANII), and 450-470 (EGGW…WTWV).

This sequence belongs to the HAK/KUP transporter (TC 2.A.72) family.

The protein localises to the cell inner membrane. The catalysed reaction is K(+)(in) + H(+)(in) = K(+)(out) + H(+)(out). In terms of biological role, transport of potassium into the cell. Likely operates as a K(+):H(+) symporter. The chain is Probable potassium transport system protein Kup from Brucella abortus (strain S19).